A 24-amino-acid polypeptide reads, in one-letter code: Cryptonin (24 aa).

In terms of biological role, antimicrobial peptide, active against the Gram-negative bacterium E.coli K12-594 (MIC=3.12 ug/ml), the Gram-positive bacteria B.subtilis KCTC 3086 (MIC=3.12 ug/ml), S.aureus KCTC 1928 (MIC=25 ug/ml) and M.luteus KCTC 3063 (MIC=1.56 ug/ml), the antibiotic resistant bacteria methicillin-resistant S.aureus (MRSA) (MIC=25 ug/ml) and vancomycin-resistant Enterococci (VRE) (MIC=25 ug/ml), and the fungi C.albicans KCTC 7965 (MIC=50 ug/ml) and C.tropicalis KCTC 1925 (MIC=3.12 ug/ml). Has very low hemolytic activity on rat erythrocytes. This chain is Cryptonin, found in Cryptotympana dubia (Korean horse cicada).